We begin with the raw amino-acid sequence, 275 residues long: Formamidopyrimidine-DNA glycosylase (275 aa).

The Schiff-base intermediate with DNA role is filled by Pro2. Glu3 acts as the Proton donor in catalysis. Residue Lys58 is the Proton donor; for beta-elimination activity of the active site. Residues His93, Arg111, and Arg156 each contribute to the DNA site. The segment at 241–275 adopts an FPG-type zinc-finger fold; it reads FAYDRAGLPCRVCGTPIRQIVQGQRSTYFCPTCQR. The Proton donor; for delta-elimination activity role is filled by Arg265.

The protein belongs to the FPG family. As to quaternary structure, monomer. The cofactor is Zn(2+).

It carries out the reaction Hydrolysis of DNA containing ring-opened 7-methylguanine residues, releasing 2,6-diamino-4-hydroxy-5-(N-methyl)formamidopyrimidine.. The enzyme catalyses 2'-deoxyribonucleotide-(2'-deoxyribose 5'-phosphate)-2'-deoxyribonucleotide-DNA = a 3'-end 2'-deoxyribonucleotide-(2,3-dehydro-2,3-deoxyribose 5'-phosphate)-DNA + a 5'-end 5'-phospho-2'-deoxyribonucleoside-DNA + H(+). Involved in base excision repair of DNA damaged by oxidation or by mutagenic agents. Acts as a DNA glycosylase that recognizes and removes damaged bases. Has a preference for oxidized purines, such as 7,8-dihydro-8-oxoguanine (8-oxoG). Has AP (apurinic/apyrimidinic) lyase activity and introduces nicks in the DNA strand. Cleaves the DNA backbone by beta-delta elimination to generate a single-strand break at the site of the removed base with both 3'- and 5'-phosphates. The chain is Formamidopyrimidine-DNA glycosylase from Burkholderia vietnamiensis (strain G4 / LMG 22486) (Burkholderia cepacia (strain R1808)).